We begin with the raw amino-acid sequence, 491 residues long: Protein nucleotidyltransferase YdiU (491 aa).

8 residues coordinate ATP: G94, G96, R97, K117, D129, G130, R180, and R187. D256 functions as the Proton acceptor in the catalytic mechanism. N257 and D266 together coordinate Mg(2+). ATP is bound at residue D266.

The protein belongs to the SELO family. The cofactor is Mg(2+). Mn(2+) is required as a cofactor.

It carries out the reaction L-seryl-[protein] + ATP = 3-O-(5'-adenylyl)-L-seryl-[protein] + diphosphate. It catalyses the reaction L-threonyl-[protein] + ATP = 3-O-(5'-adenylyl)-L-threonyl-[protein] + diphosphate. The catalysed reaction is L-tyrosyl-[protein] + ATP = O-(5'-adenylyl)-L-tyrosyl-[protein] + diphosphate. The enzyme catalyses L-histidyl-[protein] + UTP = N(tele)-(5'-uridylyl)-L-histidyl-[protein] + diphosphate. It carries out the reaction L-seryl-[protein] + UTP = O-(5'-uridylyl)-L-seryl-[protein] + diphosphate. It catalyses the reaction L-tyrosyl-[protein] + UTP = O-(5'-uridylyl)-L-tyrosyl-[protein] + diphosphate. Its function is as follows. Nucleotidyltransferase involved in the post-translational modification of proteins. It can catalyze the addition of adenosine monophosphate (AMP) or uridine monophosphate (UMP) to a protein, resulting in modifications known as AMPylation and UMPylation. The polypeptide is Protein nucleotidyltransferase YdiU (Clostridium botulinum (strain Alaska E43 / Type E3)).